The primary structure comprises 298 residues: Acetyl-coenzyme A carboxylase carboxyl transferase subunit beta (298 aa).

The 258-residue stretch at 41–298 (PTIECPECHA…RIVSKLMNLP (258 aa)) folds into the CoA carboxyltransferase N-terminal domain. The Zn(2+) site is built by Cys45, Cys48, Cys64, and Cys67. A C4-type zinc finger spans residues 45-67 (CPECHALVTRTAIAFNAYVCPSC).

It belongs to the AccD/PCCB family. Acetyl-CoA carboxylase is a heterohexamer composed of biotin carboxyl carrier protein (AccB), biotin carboxylase (AccC) and two subunits each of ACCase subunit alpha (AccA) and ACCase subunit beta (AccD). The cofactor is Zn(2+).

The protein localises to the cytoplasm. The catalysed reaction is N(6)-carboxybiotinyl-L-lysyl-[protein] + acetyl-CoA = N(6)-biotinyl-L-lysyl-[protein] + malonyl-CoA. Its pathway is lipid metabolism; malonyl-CoA biosynthesis; malonyl-CoA from acetyl-CoA: step 1/1. Functionally, component of the acetyl coenzyme A carboxylase (ACC) complex. Biotin carboxylase (BC) catalyzes the carboxylation of biotin on its carrier protein (BCCP) and then the CO(2) group is transferred by the transcarboxylase to acetyl-CoA to form malonyl-CoA. This chain is Acetyl-coenzyme A carboxylase carboxyl transferase subunit beta, found in Acinetobacter baylyi (strain ATCC 33305 / BD413 / ADP1).